Reading from the N-terminus, the 668-residue chain is MWHEARKHERKLRGMMVDYKKRAERRREYYEKIKKDPAQFLQVHGRACKVHLDSAVALAAESPVNMMPWQGDTNNMIDRFDVRAHLDHIPDYTPPLLTTISPEQESDERKCNYERYRGLVQNDFAGISEEQCLYQIYIDELYGGLQRPSEDEKKKLAEKKASIGYTYEDSTVAEVEKVAEKPEEEESPAEEESNSDEDEVIPDIDVEVDVDELNQEQVADLNKQATTYGMADGDFVRMLRKDKEEAEAIKHAKALEEEKAMYSGRRSRRQRREFREKRLRGRKISPPSYARRDSPTYDPYKRSPSESSSESRSRSRSPSPGREEKITFITSFGGSDEEAAAAAAAAAASGAAPGKPPAPPQPGGPAPGRNASARRRSSSSSASRTSSSRSSSRSSSRSRRGYYRSGRHARSRSRSWSRSRSRSRRYSRSRSRGRRHSDGGSRDGHRYSRSPARRSGYAPRRRSRSRSRSGDRYKRGARGPRHHSSSHSRSSWSLSPSRSRSLTRSGSRSQSRSRSRSQSHSQSQSHSPSPPREKLTRPAASPAVGEKLKKTEPAAGKETGAAKPKLTPQERLKLRMQKALNRQFKADKKAAQEKMIQQEHERQEREDELRAMARKIRMKERERREKEREEWERQYSRQSRSPSPRYSREYSSSRRRSRSRSRSPHYRH.

A Phosphoserine modification is found at Ser101. Disordered stretches follow at residues 173-232 and 252-668; these read AEVE…GMAD and AKAL…HYRH. The segment covering 182–214 has biased composition (acidic residues); the sequence is PEEEESPAEEESNSDEDEVIPDIDVEVDVDELN. Over residues 265 to 283 the composition is skewed to basic residues; it reads RRSRRQRREFREKRLRGRK. Ser285 and Ser294 each carry phosphoserine. Positions 290–313 are enriched in basic and acidic residues; that stretch reads ARRDSPTYDPYKRSPSESSSESRS. Thr327 bears the Phosphothreonine mark. Ser331 and Ser335 each carry phosphoserine. A compositionally biased stretch (low complexity) spans 340 to 353; that stretch reads AAAAAAAAASGAAP. The segment covering 354 to 365 has biased composition (pro residues); it reads GKPPAPPQPGGP. The span at 378 to 395 shows a compositional bias: low complexity; that stretch reads SSSSASRTSSSRSSSRSS. Basic residues predominate over residues 396–435; that stretch reads SRSRRGYYRSGRHARSRSRSWSRSRSRSRRYSRSRSRGRR. Positions 436–446 are enriched in basic and acidic residues; it reads HSDGGSRDGHR. Residues 475-486 are compositionally biased toward basic residues; it reads RGARGPRHHSSS. Low complexity-rich tracts occupy residues 487-510 and 518-527; these read HSRS…SRSQ and QSHSQSQSHS. Ser541 is subject to Phosphoserine. Thr567 is modified (phosphothreonine). Residues 579-641 are a coiled coil; the sequence is ALNRQFKADK…ERQYSRQSRS (63 aa). Basic and acidic residues-rich tracts occupy residues 584 to 611 and 619 to 635; these read FKAD…ELRA and KERE…ERQY. Low complexity predominate over residues 636-645; the sequence is SRQSRSPSPR. The segment covering 653–668 has biased composition (basic residues); that stretch reads SRRRSRSRSRSPHYRH.

The protein belongs to the splicing factor SR family. As to quaternary structure, probably interacts with CLK4. In terms of processing, phosphorylated in vitro by CLK4.

The protein resides in the nucleus. Its function is as follows. Probably functions as an alternative splicing regulator. May regulate the mRNA splicing of genes such as CLK1. May act by regulating members of the CLK kinase family. The sequence is that of CLK4-associating serine/arginine rich protein (Clasrp) from Rattus norvegicus (Rat).